The sequence spans 266 residues: HLA class II histocompatibility antigen, DR beta 5 chain (266 aa).

The first 29 residues, 1–29, serve as a signal peptide directing secretion; that stretch reads MVCLKLPGGSYMAKLTVTLMVLSSPLALA. The beta-1 stretch occupies residues 30–124; it reads GDTRPRFLQQ…GESFTVQRRV (95 aa). Residues 30 to 227 are Extracellular-facing; it reads GDTRPRFLQQ…RAQSESAQSK (198 aa). Intrachain disulfides connect C44-C108 and C146-C202. N-linked (GlcNAc...) asparagine glycosylation is present at N48. Residues 125–227 are beta-2; it reads EPKVTVYPAR…RAQSESAQSK (103 aa). Residues 126-214 form the Ig-like C1-type domain; sequence PKVTVYPART…EHPSVTSPLT (89 aa). The helical transmembrane segment at 228 to 248 threads the bilayer; sequence MLSGVGGFVLGLLFLGAGLFI. At 249–266 the chain is on the cytoplasmic side; it reads YFKNQKGHSGLHPTGLVS.

This sequence belongs to the MHC class II family. Heterodimer of an alpha and a beta subunit; also referred as MHC class II molecule. In the endoplasmic reticulum (ER) it forms a heterononamer; 3 MHC class II molecules bind to a CD74 homotrimer (also known as invariant chain or HLA class II histocompatibility antigen gamma chain). In the endosomal/lysosomal system; CD74 undergoes sequential degradation by various proteases; leaving a small fragment termed CLIP on each MHC class II molecule. MHC class II molecule interacts with HLA_DM, and HLA_DO in B-cells, in order to release CLIP and facilitate the binding of antigenic peptides. Ubiquitinated by MARCH1 and MARCH8 at Lys-254 leading to down-regulation of MHC class II.

It localises to the cell membrane. Its subcellular location is the endoplasmic reticulum membrane. The protein resides in the golgi apparatus. It is found in the trans-Golgi network membrane. The protein localises to the endosome membrane. It localises to the lysosome membrane. Its subcellular location is the late endosome membrane. Functionally, binds peptides derived from antigens that access the endocytic route of antigen presenting cells (APC) and presents them on the cell surface for recognition by the CD4 T-cells. The peptide binding cleft accommodates peptides of 10-30 residues. The peptides presented by MHC class II molecules are generated mostly by degradation of proteins that access the endocytic route, where they are processed by lysosomal proteases and other hydrolases. Exogenous antigens that have been endocytosed by the APC are thus readily available for presentation via MHC II molecules, and for this reason this antigen presentation pathway is usually referred to as exogenous. As membrane proteins on their way to degradation in lysosomes as part of their normal turn-over are also contained in the endosomal/lysosomal compartments, exogenous antigens must compete with those derived from endogenous components. Autophagy is also a source of endogenous peptides, autophagosomes constitutively fuse with MHC class II loading compartments. In addition to APCs, other cells of the gastrointestinal tract, such as epithelial cells, express MHC class II molecules and CD74 and act as APCs, which is an unusual trait of the GI tract. To produce a MHC class II molecule that presents an antigen, three MHC class II molecules (heterodimers of an alpha and a beta chain) associate with a CD74 trimer in the ER to form a heterononamer. Soon after the entry of this complex into the endosomal/lysosomal system where antigen processing occurs, CD74 undergoes a sequential degradation by various proteases, including CTSS and CTSL, leaving a small fragment termed CLIP (class-II-associated invariant chain peptide). The removal of CLIP is facilitated by HLA-DM via direct binding to the alpha-beta-CLIP complex so that CLIP is released. HLA-DM stabilizes MHC class II molecules until primary high affinity antigenic peptides are bound. The MHC II molecule bound to a peptide is then transported to the cell membrane surface. In B-cells, the interaction between HLA-DM and MHC class II molecules is regulated by HLA-DO. Primary dendritic cells (DCs) also to express HLA-DO. Lysosomal microenvironment has been implicated in the regulation of antigen loading into MHC II molecules, increased acidification produces increased proteolysis and efficient peptide loading. The chain is HLA class II histocompatibility antigen, DR beta 5 chain from Homo sapiens (Human).